The primary structure comprises 517 residues: GMP synthase [glutamine-hydrolyzing] (517 aa).

The Glutamine amidotransferase type-1 domain maps to 11 to 202 (KIIVLDFGSQ…AFDVCGAKDN (192 aa)). Cys88 functions as the Nucleophile in the catalytic mechanism. Residues His176 and Glu178 contribute to the active site. The 190-residue stretch at 203-392 (WTMDDFIKLS…LGLPHDLVWR (190 aa)) folds into the GMPS ATP-PPase domain. An ATP-binding site is contributed by 230-236 (SGGVDSS).

As to quaternary structure, homodimer.

The catalysed reaction is XMP + L-glutamine + ATP + H2O = GMP + L-glutamate + AMP + diphosphate + 2 H(+). It participates in purine metabolism; GMP biosynthesis; GMP from XMP (L-Gln route): step 1/1. Functionally, catalyzes the synthesis of GMP from XMP. The sequence is that of GMP synthase [glutamine-hydrolyzing] from Lactobacillus delbrueckii subsp. bulgaricus (strain ATCC 11842 / DSM 20081 / BCRC 10696 / JCM 1002 / NBRC 13953 / NCIMB 11778 / NCTC 12712 / WDCM 00102 / Lb 14).